Here is a 252-residue protein sequence, read N- to C-terminus: Chitooligosaccharide deacetylase (252 aa).

H125 serves as a coordination point for Mg(2+).

Belongs to the YdjC deacetylase family. ChbG subfamily. Homodimer. Mg(2+) is required as a cofactor.

The protein resides in the cytoplasm. The enzyme catalyses N,N'-diacetylchitobiose + H2O = N-acetyl-beta-D-glucosaminyl-(1-&gt;4)-D-glucosamine + acetate. The catalysed reaction is diacetylchitobiose-6'-phosphate + H2O = N'-monoacetylchitobiose-6'-phosphate + acetate. Its pathway is glycan degradation; chitin degradation. Functionally, involved in the degradation of chitin. ChbG is essential for growth on the acetylated chitooligosaccharides chitobiose and chitotriose but is dispensable for growth on cellobiose and chitosan dimer, the deacetylated form of chitobiose. Deacetylation of chitobiose-6-P and chitotriose-6-P is necessary for both the activation of the chb promoter by the regulatory protein ChbR and the hydrolysis of phosphorylated beta-glucosides by the phospho-beta-glucosidase ChbF. Catalyzes the removal of only one acetyl group from chitobiose-6-P to yield monoacetylchitobiose-6-P, the inducer of ChbR and the substrate of ChbF. The polypeptide is Chitooligosaccharide deacetylase (Escherichia coli O157:H7).